The primary structure comprises 289 residues: Acetyl-coenzyme A carboxylase carboxyl transferase subunit beta (289 aa).

The CoA carboxyltransferase N-terminal domain maps to 24–289; sequence LWIKCPESGE…NSPRRAPIPA (266 aa).

This sequence belongs to the AccD/PCCB family. As to quaternary structure, acetyl-CoA carboxylase is a heterohexamer composed of biotin carboxyl carrier protein (AccB), biotin carboxylase (AccC) and two subunits each of ACCase subunit alpha (AccA) and ACCase subunit beta (AccD).

Its subcellular location is the cytoplasm. The enzyme catalyses N(6)-carboxybiotinyl-L-lysyl-[protein] + acetyl-CoA = N(6)-biotinyl-L-lysyl-[protein] + malonyl-CoA. Its pathway is lipid metabolism; malonyl-CoA biosynthesis; malonyl-CoA from acetyl-CoA: step 1/1. Functionally, component of the acetyl coenzyme A carboxylase (ACC) complex. Biotin carboxylase (BC) catalyzes the carboxylation of biotin on its carrier protein (BCCP) and then the CO(2) group is transferred by the transcarboxylase to acetyl-CoA to form malonyl-CoA. This is Acetyl-coenzyme A carboxylase carboxyl transferase subunit beta from Beijerinckia indica subsp. indica (strain ATCC 9039 / DSM 1715 / NCIMB 8712).